Consider the following 444-residue polypeptide: Ribulose bisphosphate carboxylase (444 aa).

The active-site Proton acceptor is lysine 163. A substrate-binding site is contributed by lysine 165. Mg(2+) contacts are provided by lysine 189, aspartate 191, and glutamate 192. Position 189 is an N6-carboxylysine (lysine 189). The Proton acceptor role is filled by histidine 281. Substrate contacts are provided by residues arginine 282, histidine 314, 367-369, and 389-392; these read SGG and QLGG.

This sequence belongs to the RuBisCO large chain family. Type III subfamily. As to quaternary structure, homodimer or homodecamer. In contrast to form I RuBisCO, the form III RuBisCO is composed solely of large subunits. Mg(2+) serves as cofactor.

The enzyme catalyses 2 (2R)-3-phosphoglycerate + 2 H(+) = D-ribulose 1,5-bisphosphate + CO2 + H2O. The catalysed reaction is D-ribulose 1,5-bisphosphate + O2 = 2-phosphoglycolate + (2R)-3-phosphoglycerate + 2 H(+). Catalyzes the addition of molecular CO(2) and H(2)O to ribulose 1,5-bisphosphate (RuBP), generating two molecules of 3-phosphoglycerate (3-PGA). Functions in an archaeal AMP degradation pathway, together with AMP phosphorylase and R15P isomerase. The protein is Ribulose bisphosphate carboxylase of Thermococcus onnurineus (strain NA1).